The chain runs to 189 residues: Pyridoxal 5'-phosphate synthase subunit PdxT (189 aa).

46–48 contacts L-glutamine; it reads GES. Cys78 functions as the Nucleophile in the catalytic mechanism. L-glutamine is bound by residues Arg107 and 136-137; that span reads IR. Residues His173 and Glu175 each act as charge relay system in the active site.

This sequence belongs to the glutaminase PdxT/SNO family. As to quaternary structure, in the presence of PdxS, forms a dodecamer of heterodimers. Only shows activity in the heterodimer.

It catalyses the reaction aldehydo-D-ribose 5-phosphate + D-glyceraldehyde 3-phosphate + L-glutamine = pyridoxal 5'-phosphate + L-glutamate + phosphate + 3 H2O + H(+). The enzyme catalyses L-glutamine + H2O = L-glutamate + NH4(+). It participates in cofactor biosynthesis; pyridoxal 5'-phosphate biosynthesis. Catalyzes the hydrolysis of glutamine to glutamate and ammonia as part of the biosynthesis of pyridoxal 5'-phosphate. The resulting ammonia molecule is channeled to the active site of PdxS. This is Pyridoxal 5'-phosphate synthase subunit PdxT from Roseiflexus sp. (strain RS-1).